Here is a 246-residue protein sequence, read N- to C-terminus: Putative 4'-phosphopantetheinyl transferase slr0495 (246 aa).

Mg(2+) contacts are provided by D110 and E156.

The protein belongs to the P-Pant transferase superfamily. Gsp/Sfp/HetI/AcpT family. The cofactor is Mg(2+).

Its function is as follows. Probably transfers the 4'-phosphopantetheine moiety from coenzyme A (CoA) to a serine residue of a carrier protein domain. The protein is Putative 4'-phosphopantetheinyl transferase slr0495 of Synechocystis sp. (strain ATCC 27184 / PCC 6803 / Kazusa).